A 178-amino-acid chain; its full sequence is Zinc finger protein ZAT11 (178 aa).

C2H2-type zinc fingers lie at residues 47–69 and 94–116; these read FECK…RASH and HKCS…MRRH.

As to expression, expressed in leaves.

The protein resides in the nucleus. Its function is as follows. Probable transcription factor that may be involved in stress responses. The polypeptide is Zinc finger protein ZAT11 (ZAT11) (Arabidopsis thaliana (Mouse-ear cress)).